The following is a 291-amino-acid chain: Lipoyl synthase (291 aa).

Positions 35, 40, 46, 61, 65, 68, and 273 each coordinate [4Fe-4S] cluster. Residues 47-262 (FGKRQATFLI…KEKALAMGFE (216 aa)) form the Radical SAM core domain.

This sequence belongs to the radical SAM superfamily. Lipoyl synthase family. Requires [4Fe-4S] cluster as cofactor.

Its subcellular location is the cytoplasm. The catalysed reaction is [[Fe-S] cluster scaffold protein carrying a second [4Fe-4S](2+) cluster] + N(6)-octanoyl-L-lysyl-[protein] + 2 oxidized [2Fe-2S]-[ferredoxin] + 2 S-adenosyl-L-methionine + 4 H(+) = [[Fe-S] cluster scaffold protein] + N(6)-[(R)-dihydrolipoyl]-L-lysyl-[protein] + 4 Fe(3+) + 2 hydrogen sulfide + 2 5'-deoxyadenosine + 2 L-methionine + 2 reduced [2Fe-2S]-[ferredoxin]. It participates in protein modification; protein lipoylation via endogenous pathway; protein N(6)-(lipoyl)lysine from octanoyl-[acyl-carrier-protein]: step 2/2. In terms of biological role, catalyzes the radical-mediated insertion of two sulfur atoms into the C-6 and C-8 positions of the octanoyl moiety bound to the lipoyl domains of lipoate-dependent enzymes, thereby converting the octanoylated domains into lipoylated derivatives. This is Lipoyl synthase from Geobacter sp. (strain M21).